We begin with the raw amino-acid sequence, 799 residues long: Elongation factor G, mitochondrial (799 aa).

The N-terminal 24 residues, 1–24 (MRCPSLARLPHRAVSGLTRTPVRF), are a transit peptide targeting the mitochondrion. The 288-residue stretch at 97-384 (SRVRNIGIAA…GVIDYLPNPS (288 aa)) folds into the tr-type G domain. Residues 106–113 (AHIDSGKT), 182–186 (DTPGH), and 236–239 (NKMD) contribute to the GTP site.

The protein belongs to the TRAFAC class translation factor GTPase superfamily. Classic translation factor GTPase family. EF-G/EF-2 subfamily.

It localises to the mitochondrion. It participates in protein biosynthesis; polypeptide chain elongation. Its function is as follows. Mitochondrial GTPase that catalyzes the GTP-dependent ribosomal translocation step during translation elongation. During this step, the ribosome changes from the pre-translocational (PRE) to the post-translocational (POST) state as the newly formed A-site-bound peptidyl-tRNA and P-site-bound deacylated tRNA move to the P and E sites, respectively. Catalyzes the coordinated movement of the two tRNA molecules, the mRNA and conformational changes in the ribosome. The sequence is that of Elongation factor G, mitochondrial (mef1) from Emericella nidulans (strain FGSC A4 / ATCC 38163 / CBS 112.46 / NRRL 194 / M139) (Aspergillus nidulans).